A 1112-amino-acid polypeptide reads, in one-letter code: Patronin (microtubule-binding protein) homolog (1112 aa).

Positions 165–286 (IDSVDALLFW…VNAFLADLFV (122 aa)) constitute a Calponin-homology (CH) domain. Disordered stretches follow at residues 324-358 (AARS…SRMS), 485-504 (EGED…QPSV), 542-566 (MQQQ…PSQL), and 788-834 (NHSE…GSGE). Polar residues-rich tracts occupy residues 345–358 (SHSQ…SRMS) and 489–504 (GTQS…QPSV). The segment covering 542–557 (MQQQMQQQQQQQAQAQ) has biased composition (low complexity). Over residues 802-816 (QNDRDDLSTGRKSDD) the composition is skewed to basic and acidic residues. A coiled-coil region spans residues 850–914 (ALIAKTMKRK…YKRKKLEKEL (65 aa)). Residues 916 to 965 (AELSARSTGRGHSQPPFIRTKSQMSEVTESSRQNTPRMRGQSSVEQRVSV) form a disordered region. Positions 935–951 (TKSQMSEVTESSRQNTP) are enriched in polar residues. Residues 956-965 (QSSVEQRVSV) are compositionally biased toward low complexity. In terms of domain architecture, CKK spans 972 to 1109 (THKLYAKTVT…RIPHSGTPAH (138 aa)).

Belongs to the CAMSAP1 family. In terms of assembly, interacts with dapk-1. In terms of tissue distribution, expressed in larval and adult epidermis, intestine and pharynx. Broadly expressed in the nervous system. Expressed in body wall muscle cells.

It localises to the cell projection. The protein resides in the axon. The protein localises to the dendrite. It is found in the cell membrane. Its subcellular location is the sarcolemma. It localises to the cytoplasm. The protein resides in the cytosol. The protein localises to the cytoskeleton. It is found in the perikaryon. Its function is as follows. Required for microtubule stability and anchorage by binding to the minus ends of microtubules. Acts redundantly with noca-1 to control circumferential microtubule assembly along the body which is necessary for larval development, viability, morphology and integrity of the epidermis. Promotes microtubule stability and polymerization in neurons. Involved in the maintenance of neurite morphology in ALM and PLM neurons. May play a role in synaptic protein localization in the PLM neuron. May act upstream of dlk-1 in neuronal regeneration. Plays a role in postembryonic epidermal tissue integrity and wound healing. In Caenorhabditis elegans, this protein is Patronin (microtubule-binding protein) homolog.